Here is a 539-residue protein sequence, read N- to C-terminus: Capsid protein VP1 (539 aa).

Residues 1–221 (MKMASNDANP…FIFLVPPTVE (221 aa)) form a shell domain region. Positions 222–274 (SRTKPFTVPVLTVEEMSNSRFPIPLEKLYTGPSSAFVVQPQNGRCTTDGVLLG) are P1 sub-domain 1. The tract at residues 222–539 (SRTKPFTVPV…GNGTGRRRAL (318 aa)) is protruding domain. A P2 sub-domain region spans residues 275 to 417 (TTQLSAVNIC…SGRTGHNVHL (143 aa)). The P1 sub-domain 2 stretch occupies residues 418 to 539 (APAVAPTFPG…GNGTGRRRAL (122 aa)).

This sequence belongs to the caliciviridae capsid protein family. In terms of assembly, homodimer. Homomultimer. Interacts with the minor capsid protein VP2. Interacts (via C-terminus) with host type I histo-blood group structures antigens at the surface of target cells. In terms of processing, may be cleaved by host protease to generate soluble capsid protein. Assembled capsid cannot be cleaved.

The protein resides in the virion. Its subcellular location is the host cytoplasm. Capsid protein self assembles to form an icosahedral capsid with a T=3 symmetry, about 38 nm in diameter, and consisting of 180 capsid proteins. A smaller form of capsid with a diameter of 23 nm might be capsid proteins assembled as icosahedron with T=1 symmetry. The capsid encapsulates the genomic RNA and is decorated with VP2 proteins. Attaches virion to target cells by binding histo-blood group antigens (HBGAs) present on gastroduodenal epithelial cells. Functionally, the soluble capsid protein may play a role in viral immunoevasion. The protein is Capsid protein VP1 of Homo sapiens (Human).